Consider the following 780-residue polypeptide: Potassium/sodium hyperpolarization-activated cyclic nucleotide-gated channel 3 (780 aa).

The disordered stretch occupies residues 1–47 (MEEEARPAVGDGEAATPARETPPAAPAQARAASGGVPESAPEPKRRQ). Topologically, residues 1-96 (MEEEARPAVG…PYSDFRFYWD (96 aa)) are cytoplasmic. Positions 13–32 (EAATPARETPPAAPAQARAA) are enriched in low complexity. Positions 45 to 90 (RRQLGTLLQPTVNKFSLRVFGSHKAVEIEQERVKSAGAWIIHPYSD) are involved in subunit assembly. Residues 97–117 (LIMLLLMVGNLIVLPVGITFF) traverse the membrane as a helical segment. At 118-123 (KEENSP) the chain is on the extracellular side. A helical transmembrane segment spans residues 124–144 (PWIVFNVLSDTFFLLDLVLNF). The Cytoplasmic segment spans residues 145–170 (RTGIVVEEGAEILLAPRAIRTRYLRT). Residues 171-191 (WFLVDLISSIPVDYIFLVVEL) form a helical membrane-spanning segment. Over 192 to 200 (EPRLDAEVY) the chain is Extracellular. The chain crosses the membrane as a helical; Voltage-sensor span at residues 201–221 (KTARALRIVRFTKILSLLRLL). Over 222–252 (RLSRLIRYMHQWEEIFHMTYDLASAVVRIFN) the chain is Cytoplasmic. A helical transmembrane segment spans residues 253 to 273 (LIGMMLLLCHWDGCLQFLVPM). The Extracellular portion of the chain corresponds to 274–296 (LQDFPSDCWVSMNRMVNHSWGRQ). N-linked (GlcNAc...) asparagine glycosylation is present at Asn-290. The pore-forming intramembrane region spans 297–318 (YSHALFKAMSHMLCIGYGQQAP). Residues 319–328 (VGMPDVWLTM) lie on the Extracellular side of the membrane. Residues 329-349 (LSMIVGATCYAMFIGHATALI) traverse the membrane as a helical segment. At 350-780 (QSLDSSRRQY…PRGPQISANM (431 aa)) the chain is on the cytoplasmic side. The interval 353-780 (DSSRRQYQEK…PRGPQISANM (428 aa)) is interaction with KCTD3. 3',5'-cyclic AMP-binding residues include Gly-491, Glu-492, Cys-494, Arg-501, Thr-502, Arg-542, and Arg-545. Residues 549–569 (KNSILQRKRSEPSPGSSSGGV) are disordered. Ser-634 is modified (phosphoserine). Residues 687-698 (ASLSRTGRSQVS) show a composition bias toward polar residues. Positions 687 to 780 (ASLSRTGRSQ…PRGPQISANM (94 aa)) are disordered.

Belongs to the potassium channel HCN family. In terms of assembly, homotetramer. The potassium channel is composed of a homo- or heterotetrameric complex of pore-forming subunits. Interacts with HCN1. Interacts with KCTD3; this interaction increases cell surface expression and current density of this channel. Interacts with PEX5L.

The protein resides in the cell membrane. The catalysed reaction is K(+)(in) = K(+)(out). It catalyses the reaction Na(+)(in) = Na(+)(out). Its activity is regulated as follows. Inhibited by Cs(1+) and ivabradine. Unlike HCN2 and HCN4, HCN3 is insensitive to cyclic nucleotides, such as cAMP or cGMP. This lack of sensitivity of HCN3, despite harboring a functional cyclic nucleotide-binding domain (CNBD), may be explained by its shorter C-terminal sequence, which may alter the normal autoinhibition of the channel. Phosphatidylinositol-4,5-bisphosphate (PIP(2)) shifts HCN3 activation to more depolarized potentials and accelerated activation kinetics. Functionally, hyperpolarization-activated ion channel that are permeable to sodium and potassium ions, with an about 3:1 preference for potassium ions. Contributes to the native pacemaker currents in heart (If) and in neurons (Ih). In particular, plays a pivotal role in maintaining excitability and promoting rhythmic burst firing within hypothalamic nuclei. Exerts a significant influence on the configuration of the cardiac action potential waveform. Does not appear to play a prominent role in the processing of acute, neuropathic, or inflammatory pain. The polypeptide is Potassium/sodium hyperpolarization-activated cyclic nucleotide-gated channel 3 (Hcn3) (Rattus norvegicus (Rat)).